A 404-amino-acid polypeptide reads, in one-letter code: G1/S-specific cyclin-E2 (404 aa).

The tract at residues Met1 to Lys41 is disordered. Residues Arg7–Ile28 are compositionally biased toward polar residues. A Phosphoserine modification is found at Ser21. Residue Lys348 is modified to N6-lactoyllysine. Ser383 carries the phosphoserine modification. A Phosphothreonine modification is found at Thr392.

The protein belongs to the cyclin family. Cyclin E subfamily. Interacts with the CDK2 (in vivo) and CDK3 (in vitro) protein kinases to form a serine/threonine kinase holoenzyme complex. The cyclin subunit imparts substrate specificity to the complex. Phosphorylation by CDK2 triggers its release from CDK2 and degradation via the ubiquitin proteasome pathway. Post-translationally, lactylated at Lys-348. Delactylated by SIRT3. As to expression, highest levels in adult testis, thymus and brain. Lower levels in placenta, spleen and colon.

The protein resides in the nucleus. In terms of biological role, essential for the control of the cell cycle at the late G1 and early S phase. The sequence is that of G1/S-specific cyclin-E2 (Ccne2) from Mus musculus (Mouse).